The chain runs to 83 residues: Hainantoxin-III 5 (83 aa).

The first 21 residues, 1–21, serve as a signal peptide directing secretion; the sequence is MKASRFLALAGLVLLFVVGYA. The propeptide occupies 22 to 48; it reads SESEEKEFPRELLSKIFAVDDFKGEER. 3 disulfides stabilise this stretch: C50/C65, C57/C70, and C64/C77. L81 is modified (leucine amide).

Belongs to the neurotoxin 10 (Hwtx-1) family. 15 (Hntx-3) subfamily. As to quaternary structure, monomer. As to expression, expressed by the venom gland.

It is found in the secreted. Functionally, selective antagonist of neuronal tetrodotoxin (TTX)-sensitive voltage-gated sodium channels (IC(50)=1270 nM on Nav1.1/SCN1A, 270 nM on Nav1.2/SCN2A, 491 nM on Nav1.3/SCN3A and 232 nM on Nav1.7/SCN9A). This toxin suppress Nav1.7 current amplitude without significantly altering the activation, inactivation, and repriming kinetics. Short extreme depolarizations partially activate the toxin-bound channel, indicating voltage-dependent inhibition of this toxin. This toxin increases the deactivation of the Nav1.7 current after extreme depolarizations. The toxin-Nav1.7 complex is gradually dissociated upon prolonged strong depolarizations in a voltage-dependent manner, and the unbound toxin rebinds to Nav1.7 after a long repolarization. Moreover, analysis of chimeric channels showed that the DIIS3-S4 linker is critical for toxin binding to Nav1.7. These data are consistent with this toxin interacting with Nav1.7 site 4 and trapping the domain II voltage sensor in the closed state. This chain is Hainantoxin-III 5, found in Cyriopagopus hainanus (Chinese bird spider).